A 171-amino-acid chain; its full sequence is 3-hydroxydecanoyl-[acyl-carrier-protein] dehydratase (171 aa).

His70 is an active-site residue.

It belongs to the thioester dehydratase family. FabA subfamily. As to quaternary structure, homodimer.

The protein localises to the cytoplasm. It catalyses the reaction a (3R)-hydroxyacyl-[ACP] = a (2E)-enoyl-[ACP] + H2O. It carries out the reaction (3R)-hydroxydecanoyl-[ACP] = (2E)-decenoyl-[ACP] + H2O. The catalysed reaction is (2E)-decenoyl-[ACP] = (3Z)-decenoyl-[ACP]. It functions in the pathway lipid metabolism; fatty acid biosynthesis. In terms of biological role, necessary for the introduction of cis unsaturation into fatty acids. Catalyzes the dehydration of (3R)-3-hydroxydecanoyl-ACP to E-(2)-decenoyl-ACP and then its isomerization to Z-(3)-decenoyl-ACP. Can catalyze the dehydratase reaction for beta-hydroxyacyl-ACPs with saturated chain lengths up to 16:0, being most active on intermediate chain length. This is 3-hydroxydecanoyl-[acyl-carrier-protein] dehydratase from Pseudoalteromonas translucida (strain TAC 125).